Reading from the N-terminus, the 650-residue chain is Chaperone protein DnaK (650 aa).

Threonine 200 is modified (phosphothreonine; by autocatalysis). A disordered region spans residues 613–634; the sequence is QAGAAGAAGAAEGAAHAGGAQQ.

It belongs to the heat shock protein 70 family.

Its function is as follows. Acts as a chaperone. The chain is Chaperone protein DnaK from Burkholderia vietnamiensis (strain G4 / LMG 22486) (Burkholderia cepacia (strain R1808)).